We begin with the raw amino-acid sequence, 273 residues long: MEKLIITAAICGAEVTKEHNPNVPYTVEEIVREAKSAYDAGASVIHLHVREDDGTPTQSKERFKMCVDAIKEACPDAIIQPSTGGAVGMTDEERLQPVFLKPEMASLDCGTCNFGGDEIFVNTENMIINFSKYMIKNGVKPECEVFDKSMIDMAIRLAKKGHIQTPMHFNFVMGVNGGISATPRDLVFLIGSIPSESSFTVSAMGRNQFPMAAMAIITGGHVRVGFEDNVYIEKGVPAKSNGELVEKVVRLAKEFGRPVATPSEAREILGISK.

Glu14 provides a ligand contact to (5S)-5-amino-3-oxohexanoate. Zn(2+)-binding residues include His46 and His48. Residues Ser82, Gly85, and Ser106 each contribute to the (5S)-5-amino-3-oxohexanoate site. Glu227 contacts Zn(2+).

Belongs to the BKACE family. Kce subfamily. As to quaternary structure, homotetramer. The cofactor is Zn(2+).

The catalysed reaction is (5S)-5-amino-3-oxohexanoate + acetyl-CoA = (3S)-3-aminobutanoyl-CoA + acetoacetate. It participates in amino-acid degradation; L-lysine degradation via acetate pathway. Its function is as follows. Involved in the anaerobic fermentation of lysine. Catalyzes the reversible reaction between 3-keto-5-aminohexanoate (KAH) and acetyl-CoA to form 3-aminobutyryl-CoA and acetoacetate. The reaction involves the deprotonation of KAH, the nucleophilic addition onto acetyl-CoA and the intramolecular transfer of the CoA moiety. This Acetoanaerobium sticklandii (strain ATCC 12662 / DSM 519 / JCM 1433 / CCUG 9281 / NCIMB 10654 / HF) (Clostridium sticklandii) protein is 3-keto-5-aminohexanoate cleavage enzyme.